The primary structure comprises 403 residues: Phosphoglycerate kinase (403 aa).

Substrate contacts are provided by residues 21–23, arginine 36, 59–62, arginine 119, and arginine 159; these read DFN and HLGR. ATP-binding positions include lysine 214, glycine 301, glutamate 332, and 359 to 362; that span reads GGDS.

This sequence belongs to the phosphoglycerate kinase family. In terms of assembly, monomer.

It localises to the cytoplasm. The enzyme catalyses (2R)-3-phosphoglycerate + ATP = (2R)-3-phospho-glyceroyl phosphate + ADP. It participates in carbohydrate degradation; glycolysis; pyruvate from D-glyceraldehyde 3-phosphate: step 2/5. The sequence is that of Phosphoglycerate kinase from Lactobacillus delbrueckii subsp. bulgaricus (strain ATCC 11842 / DSM 20081 / BCRC 10696 / JCM 1002 / NBRC 13953 / NCIMB 11778 / NCTC 12712 / WDCM 00102 / Lb 14).